We begin with the raw amino-acid sequence, 569 residues long: ATP-dependent RNA helicase HAS1 (569 aa).

Disordered stretches follow at residues 1–57 (MSKG…DQNF) and 71–110 (FKEEKKQKKNKEPKTVSENALQPYAQADESTSGSDKFEDL). Residues 34-45 (EEEISSDEEEAD) show a composition bias toward acidic residues. The span at 71 to 85 (FKEEKKQKKNKEPKT) shows a compositional bias: basic and acidic residues. The Q motif motif lies at 105 to 133 (DKFEDLGLSEPTMRAIKDMGFEKMTKVQE). One can recognise a Helicase ATP-binding domain in the interval 136-312 (IPPLLAGRDV…RISLRAGPLY (177 aa)). 149–156 (AKTGSGKT) serves as a coordination point for ATP. The short motif at 259 to 262 (DEAD) is the DEAD box element. One can recognise a Helicase C-terminal domain in the interval 326–496 (GLEQGYVTCD…NIQSQLTKLI (171 aa)).

This sequence belongs to the DEAD box helicase family. DDX18/HAS1 subfamily. Associates in the nucleolus with the 60S and pre-60S ribosomal subunits.

It localises to the nucleus. The protein localises to the nucleolus. It carries out the reaction ATP + H2O = ADP + phosphate + H(+). ATP-dependent RNA helicase involved in 40S ribosomal subunit biogenesis. Required for the processing and cleavage of 35S pre-rRNA at sites A0, A1, and A2, leading to mature 18S rRNA. The polypeptide is ATP-dependent RNA helicase HAS1 (HAS1) (Meyerozyma guilliermondii (strain ATCC 6260 / CBS 566 / DSM 6381 / JCM 1539 / NBRC 10279 / NRRL Y-324) (Yeast)).